A 244-amino-acid chain; its full sequence is Protein TIFY 10b (244 aa).

Residues 97–132 (QEPEKRQLTIFYGGKVLVFNDFPADKAKGLMQLASK) enclose the Tify domain. The segment at 174–244 (QKPARANASD…AVVKPIERGQ (71 aa)) is disordered. Residues 185-210 (PIARKASLHRFLEKRKDRLNAKTPYQ) carry the Jas motif. The Nuclear localization signal motif lies at 187–194 (ARKASLHR). Residues 194 to 204 (RFLEKRKDRLN) are compositionally biased toward basic and acidic residues.

The protein belongs to the TIFY/JAZ family. Interacts with BHLH148. Interacts with COI1A and COI1B in a coronatine-dependent manner. Coronatine is an analog of jasmonoyl isoleucine (JA-Ile). Ubiquitinated. Targeted for degradation by the SCF(COI1) E3 ubiquitin ligase-proteasome pathway during jasmonate signaling.

It is found in the nucleus. Functionally, repressor of jasmonate responses. This Oryza sativa subsp. japonica (Rice) protein is Protein TIFY 10b.